The sequence spans 412 residues: Serine hydroxymethyltransferase (412 aa).

(6S)-5,6,7,8-tetrahydrofolate is bound by residues L117 and 121–123 (GHL). K226 carries the post-translational modification N6-(pyridoxal phosphate)lysine. 349 to 351 (SPF) provides a ligand contact to (6S)-5,6,7,8-tetrahydrofolate.

The protein belongs to the SHMT family. In terms of assembly, homodimer. Pyridoxal 5'-phosphate is required as a cofactor.

The protein localises to the cytoplasm. It carries out the reaction (6R)-5,10-methylene-5,6,7,8-tetrahydrofolate + glycine + H2O = (6S)-5,6,7,8-tetrahydrofolate + L-serine. Its pathway is one-carbon metabolism; tetrahydrofolate interconversion. It participates in amino-acid biosynthesis; glycine biosynthesis; glycine from L-serine: step 1/1. Catalyzes the reversible interconversion of serine and glycine with tetrahydrofolate (THF) serving as the one-carbon carrier. This reaction serves as the major source of one-carbon groups required for the biosynthesis of purines, thymidylate, methionine, and other important biomolecules. Also exhibits THF-independent aldolase activity toward beta-hydroxyamino acids, producing glycine and aldehydes, via a retro-aldol mechanism. This is Serine hydroxymethyltransferase from Nitratidesulfovibrio vulgaris (strain ATCC 29579 / DSM 644 / CCUG 34227 / NCIMB 8303 / VKM B-1760 / Hildenborough) (Desulfovibrio vulgaris).